Consider the following 456-residue polypeptide: Divalent metal cation transporter MntH (456 aa).

11 consecutive transmembrane segments (helical) span residues 47–67 (ALSFFGPGYLVAVGYMDPGNW), 77–97 (FGYALLSVVLLSNLMAVLLQA), 123–143 (AWPLWLLAELAICATDLAEVI), 151–171 (LLFGIPLEIGVILTAVDVLLV), 184–204 (ALIITLLGVIALCFLTQIIMA), 227–247 (MLYIALGIIGATVMPHNLYLH), 276–296 (IALTFALVINASILILAAASF), 316–336 (PLLGSAIAPALFAIALLCCGL), 369–389 (FVAIVPAAIVTILYGSQGTTE), 392–412 (ILSQVVLSLQLPFAVIPLVIF), and 422–442 (LAAAPWVTFLAAITAAIIVVL).

It belongs to the NRAMP family.

The protein localises to the cell inner membrane. Its function is as follows. H(+)-stimulated, divalent metal cation uptake system. The protein is Divalent metal cation transporter MntH of Brucella suis biovar 1 (strain 1330).